A 512-amino-acid polypeptide reads, in one-letter code: ATP synthase subunit alpha (512 aa).

ATP is bound at residue 169–176; that stretch reads GDRQTGKT.

The protein belongs to the ATPase alpha/beta chains family. As to quaternary structure, F-type ATPases have 2 components, CF(1) - the catalytic core - and CF(0) - the membrane proton channel. CF(1) has five subunits: alpha(3), beta(3), gamma(1), delta(1), epsilon(1). CF(0) has three main subunits: a(1), b(2) and c(9-12). The alpha and beta chains form an alternating ring which encloses part of the gamma chain. CF(1) is attached to CF(0) by a central stalk formed by the gamma and epsilon chains, while a peripheral stalk is formed by the delta and b chains.

The protein resides in the cell membrane. It catalyses the reaction ATP + H2O + 4 H(+)(in) = ADP + phosphate + 5 H(+)(out). Produces ATP from ADP in the presence of a proton gradient across the membrane. The alpha chain is a regulatory subunit. In Buchnera aphidicola subsp. Acyrthosiphon pisum (strain Tuc7), this protein is ATP synthase subunit alpha.